We begin with the raw amino-acid sequence, 202 residues long: Outer-membrane lipoprotein carrier protein (202 aa).

The first 20 residues, methionine 1–alanine 20, serve as a signal peptide directing secretion.

The protein belongs to the LolA family. As to quaternary structure, monomer.

It localises to the periplasm. Its function is as follows. Participates in the translocation of lipoproteins from the inner membrane to the outer membrane. Only forms a complex with a lipoprotein if the residue after the N-terminal Cys is not an aspartate (The Asp acts as a targeting signal to indicate that the lipoprotein should stay in the inner membrane). The polypeptide is Outer-membrane lipoprotein carrier protein (Aeromonas salmonicida (strain A449)).